Consider the following 433-residue polypeptide: 23S rRNA (uracil(1939)-C(5))-methyltransferase RlmD (433 aa).

The region spanning 1 to 53 (MPTAVIESLDHEGRGIARVEGKAVFIEGGLPGETVEYRVLRSKPNYEQAEATR) is the TRAM domain. Residues Cys66, Cys72, Cys75, and Cys154 each coordinate [4Fe-4S] cluster. The S-adenosyl-L-methionine site is built by Gln263, Phe292, Asn297, Glu313, Asn341, and Asp362. The active-site Nucleophile is Cys389.

It belongs to the class I-like SAM-binding methyltransferase superfamily. RNA M5U methyltransferase family. RlmD subfamily.

It catalyses the reaction uridine(1939) in 23S rRNA + S-adenosyl-L-methionine = 5-methyluridine(1939) in 23S rRNA + S-adenosyl-L-homocysteine + H(+). Catalyzes the formation of 5-methyl-uridine at position 1939 (m5U1939) in 23S rRNA. The polypeptide is 23S rRNA (uracil(1939)-C(5))-methyltransferase RlmD (Azoarcus sp. (strain BH72)).